Consider the following 377-residue polypeptide: MDSDILVSRTRTATIAQGATGYLMIDLAALGRNYRKLVSMLAPVRAGAVVKADAYGLGAERVARTLYSEGCRHFFVAQFVEAVRLRPALAHDAQIFVLNGLQPGNEIACAEMGIVPVLNSLAQWRQWSAAARILKRCLPAVLQFDTGMSRLGFPREERRELAAALRDGSNVEILFIMSHLASADDMGSEQNGEQFAEMSRIADEFPGFDISFANSGGVFLGEAYYGVLARPGIALYGGAPNAGEKNPMEPVVSLNVAVVQTRTVPAGAKVGYGGAHVTQRETRLATIAAGYADGLPRCLSDRGAVYFKGVRLPIVGRVSMDSTTVDITALPEGALTFGSLVEVLGRHQTLEDIARDAGTISYEILTGLGDRYDRQYR.

K51 (proton acceptor; specific for D-alanine) is an active-site residue. At K51 the chain carries N6-(pyridoxal phosphate)lysine. R150 contributes to the substrate binding site. Residue Y272 is the Proton acceptor; specific for L-alanine of the active site. M320 serves as a coordination point for substrate.

Belongs to the alanine racemase family. Requires pyridoxal 5'-phosphate as cofactor.

It carries out the reaction L-alanine = D-alanine. In terms of biological role, isomerizes L-alanine to D-alanine which is then oxidized to pyruvate by DadA. This is Alanine racemase, catabolic (dadX) from Rhizobium johnstonii (strain DSM 114642 / LMG 32736 / 3841) (Rhizobium leguminosarum bv. viciae).